The chain runs to 75 residues: Metallothionein-like protein 1 (75 aa).

It belongs to the metallothionein superfamily. Type 15 family.

In terms of biological role, metallothioneins have a high content of cysteine residues that bind various heavy metals. This Trifolium repens (Creeping white clover) protein is Metallothionein-like protein 1 (MT1B).